Reading from the N-terminus, the 413-residue chain is Methylaspartate ammonia-lyase (413 aa).

Residue glutamine 172 participates in (2S,3S)-3-methyl-L-aspartate binding. Residues aspartate 238, glutamate 273, and aspartate 307 each coordinate Mg(2+). Position 329 (glutamine 329) interacts with (2S,3S)-3-methyl-L-aspartate. Lysine 331 (proton acceptor) is an active-site residue. 360-361 (TC) contributes to the (2S,3S)-3-methyl-L-aspartate binding site.

This sequence belongs to the methylaspartate ammonia-lyase family. In terms of assembly, homodimer. The cofactor is Mg(2+).

It catalyses the reaction (2S,3S)-3-methyl-L-aspartate = mesaconate + NH4(+). It participates in amino-acid degradation; L-glutamate degradation via mesaconate pathway; acetate and pyruvate from L-glutamate: step 2/4. Functionally, involved in the methylaspartate cycle. Catalyzes the formation of the alpha,beta-unsaturated bond by the reversible anti elimination of ammonia from L-threo-beta-methylaspartate (L-threo-(2S,3S)-3-methylaspartate) to give mesaconate. The sequence is that of Methylaspartate ammonia-lyase from Citrobacter amalonaticus.